Reading from the N-terminus, the 237-residue chain is ATP synthase subunit a (237 aa).

5 helical membrane-spanning segments follow: residues 18-38 (LTLL…VYWA), 77-97 (SLFL…GLMA), 114-134 (NIAF…VEGI), 167-187 (LALR…LLVT), and 208-230 (AFSV…MYLG).

It belongs to the ATPase A chain family. F-type ATPases have 2 components, CF(1) - the catalytic core - and CF(0) - the membrane proton channel. CF(1) has five subunits: alpha(3), beta(3), gamma(1), delta(1), epsilon(1). CF(0) has three main subunits: a(1), b(2) and c(9-12). The alpha and beta chains form an alternating ring which encloses part of the gamma chain. CF(1) is attached to CF(0) by a central stalk formed by the gamma and epsilon chains, while a peripheral stalk is formed by the delta and b chains.

The protein localises to the cell membrane. Key component of the proton channel; it plays a direct role in the translocation of protons across the membrane. The chain is ATP synthase subunit a from Streptococcus gordonii (strain Challis / ATCC 35105 / BCRC 15272 / CH1 / DL1 / V288).